The sequence spans 403 residues: Argininosuccinate synthase (403 aa).

Residue 9-17 coordinates ATP; the sequence is AYSGGLDTS. Tyrosine 86 provides a ligand contact to L-citrulline. Glycine 116 is an ATP binding site. L-aspartate is bound by residues threonine 118, asparagine 122, and aspartate 123. An L-citrulline-binding site is contributed by asparagine 122. The L-citrulline site is built by arginine 126, serine 174, serine 183, glutamate 259, and tyrosine 271.

This sequence belongs to the argininosuccinate synthase family. Type 1 subfamily. As to quaternary structure, homotetramer.

The protein localises to the cytoplasm. It carries out the reaction L-citrulline + L-aspartate + ATP = 2-(N(omega)-L-arginino)succinate + AMP + diphosphate + H(+). Its pathway is amino-acid biosynthesis; L-arginine biosynthesis; L-arginine from L-ornithine and carbamoyl phosphate: step 2/3. This is Argininosuccinate synthase from Shouchella clausii (strain KSM-K16) (Alkalihalobacillus clausii).